A 254-amino-acid polypeptide reads, in one-letter code: PF03932 family protein CutC (254 aa).

This sequence belongs to the CutC family.

It is found in the cytoplasm. This is PF03932 family protein CutC from Yersinia pestis bv. Antiqua (strain Antiqua).